The chain runs to 341 residues: GTP 3',8-cyclase (341 aa).

One can recognise a Radical SAM core domain in the interval 11-231; the sequence is QKSRPLRDLR…RIINEDMPIE (221 aa). Arginine 20 serves as a coordination point for GTP. Residues cysteine 27 and cysteine 31 each contribute to the [4Fe-4S] cluster site. Tyrosine 33 lines the S-adenosyl-L-methionine pocket. Cysteine 34 serves as a coordination point for [4Fe-4S] cluster. Arginine 75 is a binding site for GTP. Residue glycine 79 coordinates S-adenosyl-L-methionine. Threonine 106 provides a ligand contact to GTP. Serine 130 lines the S-adenosyl-L-methionine pocket. Lysine 167 lines the GTP pocket. Position 201 (methionine 201) interacts with S-adenosyl-L-methionine. Positions 265 and 268 each coordinate [4Fe-4S] cluster. Position 270 to 272 (270 to 272) interacts with GTP; sequence RAR. Cysteine 282 serves as a coordination point for [4Fe-4S] cluster.

This sequence belongs to the radical SAM superfamily. MoaA family. Monomer and homodimer. [4Fe-4S] cluster serves as cofactor.

It carries out the reaction GTP + AH2 + S-adenosyl-L-methionine = (8S)-3',8-cyclo-7,8-dihydroguanosine 5'-triphosphate + 5'-deoxyadenosine + L-methionine + A + H(+). It participates in cofactor biosynthesis; molybdopterin biosynthesis. In terms of biological role, catalyzes the cyclization of GTP to (8S)-3',8-cyclo-7,8-dihydroguanosine 5'-triphosphate. The polypeptide is GTP 3',8-cyclase (Bacillus licheniformis (strain ATCC 14580 / DSM 13 / JCM 2505 / CCUG 7422 / NBRC 12200 / NCIMB 9375 / NCTC 10341 / NRRL NRS-1264 / Gibson 46)).